The primary structure comprises 568 residues: Dihydroxy-acid dehydratase 1 (568 aa).

The segment at 1–22 (MAEQTNTPDLKPRSRDVTDGLE) is disordered. Basic and acidic residues predominate over residues 10 to 22 (LKPRSRDVTDGLE). Cys57 provides a ligand contact to [2Fe-2S] cluster. Residue Asp89 coordinates Mg(2+). [2Fe-2S] cluster is bound at residue Cys130. Positions 131 and 132 each coordinate Mg(2+). Lys132 is modified (N6-carboxylysine). Residue Cys207 participates in [2Fe-2S] cluster binding. Glu458 lines the Mg(2+) pocket. Ser484 (proton acceptor) is an active-site residue.

The protein belongs to the IlvD/Edd family. Homodimer. Requires [2Fe-2S] cluster as cofactor. Mg(2+) is required as a cofactor.

The catalysed reaction is (2R)-2,3-dihydroxy-3-methylbutanoate = 3-methyl-2-oxobutanoate + H2O. The enzyme catalyses (2R,3R)-2,3-dihydroxy-3-methylpentanoate = (S)-3-methyl-2-oxopentanoate + H2O. The protein operates within amino-acid biosynthesis; L-isoleucine biosynthesis; L-isoleucine from 2-oxobutanoate: step 3/4. It participates in amino-acid biosynthesis; L-valine biosynthesis; L-valine from pyruvate: step 3/4. Its function is as follows. Functions in the biosynthesis of branched-chain amino acids. Catalyzes the dehydration of (2R,3R)-2,3-dihydroxy-3-methylpentanoate (2,3-dihydroxy-3-methylvalerate) into 2-oxo-3-methylpentanoate (2-oxo-3-methylvalerate) and of (2R)-2,3-dihydroxy-3-methylbutanoate (2,3-dihydroxyisovalerate) into 2-oxo-3-methylbutanoate (2-oxoisovalerate), the penultimate precursor to L-isoleucine and L-valine, respectively. The chain is Dihydroxy-acid dehydratase 1 from Nocardia farcinica (strain IFM 10152).